A 95-amino-acid polypeptide reads, in one-letter code: Co-chaperonin GroES (95 aa).

A disordered region spans residues 36-55 (QEGEVVAVGSGKTLDDGSKV).

This sequence belongs to the GroES chaperonin family. In terms of assembly, heptamer of 7 subunits arranged in a ring. Interacts with the chaperonin GroEL.

It localises to the cytoplasm. Together with the chaperonin GroEL, plays an essential role in assisting protein folding. The GroEL-GroES system forms a nano-cage that allows encapsulation of the non-native substrate proteins and provides a physical environment optimized to promote and accelerate protein folding. GroES binds to the apical surface of the GroEL ring, thereby capping the opening of the GroEL channel. This is Co-chaperonin GroES from Natranaerobius thermophilus (strain ATCC BAA-1301 / DSM 18059 / JW/NM-WN-LF).